Reading from the N-terminus, the 383-residue chain is Chitinase-3-like protein 1 (383 aa).

Residues 1 to 21 (MGLRVAQTGFVALVLLQSCAA) form the signal peptide. The region spanning 22–383 (YKLVCYYTSW…SAIKDVLAAA (362 aa)) is the GH18 domain. C26 and C51 are disulfide-bonded. N60 is a glycosylation site (N-linked (GlcNAc...) asparagine). Chitin is bound by residues 70-71 (EW), 97-100 (GGWN), Y141, 204-207 (LTYD), and R263. A disulfide bridge connects residues C300 and C364. An important for AKT1 activation and IL8 production region spans residues 324–338 (QWVGYDDQESVKNKA). W352 contributes to the chitin binding site.

This sequence belongs to the glycosyl hydrolase 18 family. As to quaternary structure, monomer. In terms of tissue distribution, detected in smooth muscle cells in atherosclerotic plaques. Detected in regions of vascular occlusion in the aorta.

Its subcellular location is the secreted. It localises to the extracellular space. The protein resides in the cytoplasm. The protein localises to the perinuclear region. It is found in the endoplasmic reticulum. In terms of biological role, carbohydrate-binding lectin with a preference for chitin. Has no chitinase activity. May play a role in tissue remodeling and in the capacity of cells to respond to and cope with changes in their environment. Plays a role in T-helper cell type 2 (Th2) inflammatory response and IL-13-induced inflammation, regulating allergen sensitization, inflammatory cell apoptosis, dendritic cell accumulation and M2 macrophage differentiation. Facilitates invasion of pathogenic enteric bacteria into colonic mucosa and lymphoid organs. Mediates activation of AKT1 signaling pathway and subsequent IL8 production in colonic epithelial cells. Regulates antibacterial responses in lung by contributing to macrophage bacterial killing, controlling bacterial dissemination and augmenting host tolerance. Also regulates hyperoxia-induced injury, inflammation and epithelial apoptosis in lung. Stimulates migration and adhesion of cultured vascular smooth muscle cells. The polypeptide is Chitinase-3-like protein 1 (CHI3L1) (Sus scrofa (Pig)).